Reading from the N-terminus, the 56-residue chain is Small ribosomal subunit protein uS14 (56 aa).

Residues C21, C24, C39, and C42 each contribute to the Zn(2+) site.

The protein belongs to the universal ribosomal protein uS14 family. Requires Zn(2+) as cofactor.

This is Small ribosomal subunit protein uS14 (RPS29) from Triticum aestivum (Wheat).